We begin with the raw amino-acid sequence, 173 residues long: Putative 4-hydroxy-4-methyl-2-oxoglutarate aldolase (173 aa).

Residues 89-92 (GGNL) and Arg111 contribute to the substrate site. Asp112 provides a ligand contact to a divalent metal cation.

Belongs to the class II aldolase/RraA-like family. Homotrimer. Requires a divalent metal cation as cofactor.

It carries out the reaction 4-hydroxy-4-methyl-2-oxoglutarate = 2 pyruvate. The catalysed reaction is oxaloacetate + H(+) = pyruvate + CO2. Catalyzes the aldol cleavage of 4-hydroxy-4-methyl-2-oxoglutarate (HMG) into 2 molecules of pyruvate. Also contains a secondary oxaloacetate (OAA) decarboxylase activity due to the common pyruvate enolate transition state formed following C-C bond cleavage in the retro-aldol and decarboxylation reactions. This is Putative 4-hydroxy-4-methyl-2-oxoglutarate aldolase from Albidiferax ferrireducens (strain ATCC BAA-621 / DSM 15236 / T118) (Rhodoferax ferrireducens).